Consider the following 466-residue polypeptide: Phosphomethylpyrimidine synthase (466 aa).

Residues N80, M109, Y139, H175, 195–197 (SRG), 236–239 (DSLR), and E275 each bind substrate. Zn(2+) is bound at residue H279. Y302 is a binding site for substrate. Zn(2+) is bound at residue H343. [4Fe-4S] cluster-binding residues include C423, C426, and C431.

The protein belongs to the ThiC family. Requires [4Fe-4S] cluster as cofactor.

It catalyses the reaction 5-amino-1-(5-phospho-beta-D-ribosyl)imidazole + S-adenosyl-L-methionine = 4-amino-2-methyl-5-(phosphooxymethyl)pyrimidine + CO + 5'-deoxyadenosine + formate + L-methionine + 3 H(+). Its pathway is cofactor biosynthesis; thiamine diphosphate biosynthesis. Catalyzes the synthesis of the hydroxymethylpyrimidine phosphate (HMP-P) moiety of thiamine from aminoimidazole ribotide (AIR) in a radical S-adenosyl-L-methionine (SAM)-dependent reaction. The chain is Phosphomethylpyrimidine synthase from Prochlorococcus marinus (strain NATL2A).